Consider the following 610-residue polypeptide: MPPKKAPAKKLHELAAEVRVGHKINDISKKTFIVGKQFATGGFGRIHTCTEEGKSQQMVMKIEPSTNGPLLTEVVVFNRILKKELIESYKKKKKISWIGLPYLIANGYFTYESEKMRYMIIPKYATSLEAVRETNGGTLAMKDSLTVASCILDALEYLHESDYAHADVKAANILLEKQGVYSTAVLVDFGLAHRTTNNVDKPDKKRAHNGTCIFTSTDAHRGNNPSFRGDIEILAYNLMMWATGTLPWMALESSPEKVFDAKQKFIAGLPGTLQNVLKNESSAVVGCIASMFDISMKTNYTDKVDMGKLKKLVTDAIQKTSSDGKKTPTRQKKLAEEDKNAVTPKRSTRRLAVKEESDNKDNDEVEVKPEKKATPRKRTTRKAVEVNNDSDDNEEQYENPKSKSSRTQTKSKRAKEEDVDDEEEIIIPKSSRSRSKVQLSGEGSDVTTPSSAASTSRSRSIRLGLTSSTASSNKVAKKIEQKYKRLSMNKSSLVPVTISVASDKSPTTSTPSSSSGLRSKRKSSEDVGEGITLKTQVLITPAIKKAKTKSGISSATKASPTELRRVPGVRNFPKGRRSMIIKETSAKYKERLASRQTKPTFDDSSCSSEV.

The Protein kinase domain occupies Phe32 to Val384. Residues Phe38 to Ile46 and Lys61 each bind ATP. Asp167 serves as the catalytic Proton acceptor. 4 disordered regions span residues Ile317–Ala476, Ile498–Gly530, Lys544–Arg577, and Glu590–Val610. Over residues Ala352–Ala373 the composition is skewed to basic and acidic residues. Residues Asn388–Tyr397 show a composition bias toward acidic residues. Residues Thr447–Ser458 show a composition bias toward low complexity. The segment covering Leu465–Lys474 has biased composition (polar residues). A compositionally biased stretch (low complexity) spans Ser502 to Leu517. 2 stretches are compositionally biased toward polar residues: residues Ser550 to Ser559 and Ser594 to Val610.

Belongs to the protein kinase superfamily. CK1 Ser/Thr protein kinase family. VRK subfamily. In terms of processing, autophosphorylates in vitro. In terms of tissue distribution, present in germ cells at all stages of progression from the mitotic zone to mature oocytes, but not in maturing spermatids (at the protein level). Expressed in the ventral nerve cord and vulva cells.

The protein resides in the nucleus. Its subcellular location is the cytoplasm. It localises to the cajal body. The enzyme catalyses L-seryl-[protein] + ATP = O-phospho-L-seryl-[protein] + ADP + H(+). The catalysed reaction is L-threonyl-[protein] + ATP = O-phospho-L-threonyl-[protein] + ADP + H(+). Its function is as follows. Serine/threonine kinase that phosphorylates baf-1, thus regulating the association of baf-1 with chromatin and nuclear membrane proteins during nuclear envelope formation. May act through the egl-17 signaling pathway. Essential in hermaphrodites for formation of the vulva, uterus, and uterine seam cells and for development and maintenance of the somatic gonad and thus the germ line. Acts to prevent cep-1 from triggering an inappropriate cell cycle arrest, thereby promoting germ cell proliferation. Regulates anchor cell polarity and the timing of anchor cell invasion through the basement membranes separating vulval and somatic gonadal cells during the L3 larval stage. This is Serine/threonine-protein kinase VRK1 from Caenorhabditis elegans.